Here is a 634-residue protein sequence, read N- to C-terminus: Chaperone protein HtpG (634 aa).

The tract at residues 1-342 (MTVETDKQTL…SSDLSLNVSR (342 aa)) is a; substrate-binding. The segment at 343–559 (EILQSGPVVD…QGDLGLQMRQ (217 aa)) is b. The tract at residues 560–634 (LLEASGQAVP…LNKLLLELSV (75 aa)) is c.

It belongs to the heat shock protein 90 family. As to quaternary structure, homodimer.

It is found in the cytoplasm. In terms of biological role, molecular chaperone. Has ATPase activity. The polypeptide is Chaperone protein HtpG (Xanthomonas euvesicatoria pv. vesicatoria (strain 85-10) (Xanthomonas campestris pv. vesicatoria)).